The sequence spans 252 residues: ELH type 2 (252 aa).

Residues A1–S19 form the signal peptide. 3 propeptides span residues A20–E75, P92–L130, and A144–A185. The segment covering A145 to H161 has biased composition (basic and acidic residues). Positions A145 to P171 are disordered. Position 222 is a lysine amide (K222).

The protein belongs to the molluscan ELH family. As to expression, bag cell neurons.

The protein resides in the secreted. In terms of biological role, ELH acts as a neurotransmitter locally, upon neurons of the abdominal ganglion and as a hormone by diffusing into the circulating hemolymph and modulating the activity of other organs. It specifically causes contraction of smooth muscle in the ovotestis and expulsion of the egg string. Functionally, alpha-BCP decreases the activity of a cluster of neurons in the left upper quadrant of the abdominal ganglion. Beta-BCP specifically excites 2 neurons, L1 and R1, in the abdominal ganglion. This Aplysia parvula (Dwarf sea hare) protein is ELH type 2 (ELH2).